We begin with the raw amino-acid sequence, 384 residues long: Probable endopolygalacturonase C (384 aa).

An N-terminal signal peptide occupies residues 1 to 19; the sequence is MVRQLILISSLLAAVAVRA. Residues 20 to 40 constitute a propeptide that is removed on maturation; the sequence is APADPAHPMVTEAPDVNLVEK. Cysteines 45 and 63 form a disulfide. 2 PbH1 repeats span residues 176–207 and 208–229; these read STDLTMTDITVDNTDGDTDDLAANTDGFDIGE and STYITITGAEIYNQDDCVAINS. The Proton donor role is filled by aspartate 222. Cysteine 224 and cysteine 240 are joined by a disulfide. Residue histidine 244 is part of the active site. PbH1 repeat units follow at residues 254 to 280 and 288 to 310; these read RDDNTVKNVTFYDVNVLKSQQAIRIKT and VSEVTYHEIAFSDATDYGIVIEQ. N-linked (GlcNAc...) asparagine glycosylation is present at asparagine 261. Intrachain disulfides connect cysteine 349/cysteine 354 and cysteine 373/cysteine 382.

Belongs to the glycosyl hydrolase 28 family.

The protein localises to the secreted. It carries out the reaction (1,4-alpha-D-galacturonosyl)n+m + H2O = (1,4-alpha-D-galacturonosyl)n + (1,4-alpha-D-galacturonosyl)m.. Functionally, involved in maceration and soft-rotting of plant tissue. Hydrolyzes the 1,4-alpha glycosidic bonds of de-esterified pectate in the smooth region of the plant cell wall. In Aspergillus niger (strain ATCC MYA-4892 / CBS 513.88 / FGSC A1513), this protein is Probable endopolygalacturonase C (pgaC).